Consider the following 287-residue polypeptide: NAD kinase (287 aa).

Asp66 functions as the Proton acceptor in the catalytic mechanism. Residues 66–67 (DG), 137–138 (ND), Arg148, Arg165, Asp167, and 178–183 (TAYSMS) each bind NAD(+).

This sequence belongs to the NAD kinase family. A divalent metal cation is required as a cofactor.

The protein localises to the cytoplasm. It carries out the reaction NAD(+) + ATP = ADP + NADP(+) + H(+). Its function is as follows. Involved in the regulation of the intracellular balance of NAD and NADP, and is a key enzyme in the biosynthesis of NADP. Catalyzes specifically the phosphorylation on 2'-hydroxyl of the adenosine moiety of NAD to yield NADP. The chain is NAD kinase from Chlorobium limicola (strain DSM 245 / NBRC 103803 / 6330).